Here is a 303-residue protein sequence, read N- to C-terminus: Ribonucleoside-diphosphate reductase small subunit (303 aa).

Fe cation is bound by residues Asp60, Glu90, and His93. Tyr97 is a catalytic residue. Residues 147–167 form a helical membrane-spanning segment; it reads LLMILIEGIFFASSFASISYL. Fe cation contacts are provided by Glu153, Glu187, and His190.

It belongs to the ribonucleoside diphosphate reductase small chain family. As to quaternary structure, heterotetramer composed of a homodimer of the large subunit (R1) and a homodimer of the small subunit (R2). Larger multisubunit protein complex are also active, composed of (R1)n(R2)n. Fe cation is required as a cofactor.

It localises to the host membrane. The enzyme catalyses a 2'-deoxyribonucleoside 5'-diphosphate + [thioredoxin]-disulfide + H2O = a ribonucleoside 5'-diphosphate + [thioredoxin]-dithiol. In terms of biological role, ribonucleoside-diphosphate reductase holoenzyme provides the precursors necessary for viral DNA synthesis. Allows virus growth in non-dividing cells, as well as reactivation from latency in infected hosts. Catalyzes the biosynthesis of deoxyribonucleotides from the corresponding ribonucleotides. This chain is Ribonucleoside-diphosphate reductase small subunit, found in Suid herpesvirus 1 (strain Kaplan) (SuHV-1).